Consider the following 218-residue polypeptide: Adenylate kinase (218 aa).

Position 10–15 (10–15) interacts with ATP; it reads GAGKGT. The NMP stretch occupies residues 30–59; that stretch reads STGDMLRAAVKQGTPLGQEAKKVMDAGGLV. AMP-binding positions include T31, R36, 57 to 59, 85 to 88, and Q92; these read GLV and GFPR. The interval 122–159 is LID; it reads GRRVHPASGRSYHVRFNPPKQEGLDDVTGEPLVQRDDD. Residues R123 and 132-133 contribute to the ATP site; that span reads SY. AMP contacts are provided by R156 and R167. Position 203 (G203) interacts with ATP.

It belongs to the adenylate kinase family. In terms of assembly, monomer.

The protein localises to the cytoplasm. The catalysed reaction is AMP + ATP = 2 ADP. Its pathway is purine metabolism; AMP biosynthesis via salvage pathway; AMP from ADP: step 1/1. In terms of biological role, catalyzes the reversible transfer of the terminal phosphate group between ATP and AMP. Plays an important role in cellular energy homeostasis and in adenine nucleotide metabolism. This is Adenylate kinase from Bordetella petrii (strain ATCC BAA-461 / DSM 12804 / CCUG 43448).